We begin with the raw amino-acid sequence, 383 residues long: Chorismate synthase (383 aa).

The NADP(+) site is built by R40 and R46. FMN contacts are provided by residues 128-130 (RAS), G291, 306-310 (KPIPT), and R332.

This sequence belongs to the chorismate synthase family. In terms of assembly, homotetramer. The cofactor is FMNH2.

The enzyme catalyses 5-O-(1-carboxyvinyl)-3-phosphoshikimate = chorismate + phosphate. Its pathway is metabolic intermediate biosynthesis; chorismate biosynthesis; chorismate from D-erythrose 4-phosphate and phosphoenolpyruvate: step 7/7. Catalyzes the anti-1,4-elimination of the C-3 phosphate and the C-6 proR hydrogen from 5-enolpyruvylshikimate-3-phosphate (EPSP) to yield chorismate, which is the branch point compound that serves as the starting substrate for the three terminal pathways of aromatic amino acid biosynthesis. This reaction introduces a second double bond into the aromatic ring system. The polypeptide is Chorismate synthase (Moorella thermoacetica (strain ATCC 39073 / JCM 9320)).